A 279-amino-acid polypeptide reads, in one-letter code: Diaminopimelate epimerase (279 aa).

Residues Asn13 and Asn66 each coordinate substrate. Cys75 serves as the catalytic Proton donor. Substrate-binding positions include 76–77 (GN), Asn162, Asn195, and 213–214 (ER). The active-site Proton acceptor is the Cys222. 223-224 (GT) is a substrate binding site.

It belongs to the diaminopimelate epimerase family. Homodimer.

The protein resides in the cytoplasm. The catalysed reaction is (2S,6S)-2,6-diaminopimelate = meso-2,6-diaminopimelate. The protein operates within amino-acid biosynthesis; L-lysine biosynthesis via DAP pathway; DL-2,6-diaminopimelate from LL-2,6-diaminopimelate: step 1/1. Catalyzes the stereoinversion of LL-2,6-diaminopimelate (L,L-DAP) to meso-diaminopimelate (meso-DAP), a precursor of L-lysine and an essential component of the bacterial peptidoglycan. This chain is Diaminopimelate epimerase, found in Synechocystis sp. (strain ATCC 27184 / PCC 6803 / Kazusa).